The primary structure comprises 400 residues: Enoyl-[acyl-carrier-protein] reductase [NADH] (400 aa).

NAD(+) contacts are provided by residues 48–53, 74–75, 111–112, and 139–140; these read GSSSGY, FE, DA, and LA. Tyr-225 serves as a coordination point for substrate. Residue Tyr-235 is the Proton donor of the active site. NAD(+)-binding positions include Lys-244 and 273-275; that span reads VVT.

This sequence belongs to the TER reductase family. In terms of assembly, monomer.

It carries out the reaction a 2,3-saturated acyl-[ACP] + NAD(+) = a (2E)-enoyl-[ACP] + NADH + H(+). Its pathway is lipid metabolism; fatty acid biosynthesis. Involved in the final reduction of the elongation cycle of fatty acid synthesis (FAS II). Catalyzes the reduction of a carbon-carbon double bond in an enoyl moiety that is covalently linked to an acyl carrier protein (ACP). The protein is Enoyl-[acyl-carrier-protein] reductase [NADH] of Shewanella baltica (strain OS223).